A 222-amino-acid chain; its full sequence is Glutathione S-transferase A1 (222 aa).

An N-acetylmethionine modification is found at Met1. Ala2 carries the post-translational modification N-acetylalanine; in Glutathione S-transferase A1, N-terminally processed. Residues 3-83 (GKPTLHYFNG…YIATKYNLYG (81 aa)) enclose the GST N-terminal domain. The residue at position 4 (Lys4) is an N6-succinyllysine. Residues Tyr9, Lys45, 54–55 (QV), and 67–68 (QT) each bind glutathione. Residues 85–208 (DMKERALIDM…QPGSQRKPPT (124 aa)) enclose the GST C-terminal domain.

Belongs to the GST superfamily. Alpha family. Homodimer or heterodimer of GSTA1 and GSTA2. In terms of tissue distribution, expressed in corpus luteum, adrenal gland, testis, liver, lung, thyroid and kidney.

Its subcellular location is the cytoplasm. The catalysed reaction is RX + glutathione = an S-substituted glutathione + a halide anion + H(+). The enzyme catalyses prostaglandin A2 + glutathione = prostaglandin A2-S-(R)-glutathione. It catalyses the reaction prostaglandin J2 + glutathione = prostaglandin J2-S-(R)-glutathione. It carries out the reaction (13S)-hydroperoxy-(9Z,11E)-octadecadienoate + 2 glutathione = (13S)-hydroxy-(9Z,11E)-octadecadienoate + glutathione disulfide + H2O. The catalysed reaction is androst-5-ene-3,17-dione = androst-4-ene-3,17-dione. Glutathione S-transferase that catalyzes the nucleophilic attack of the sulfur atom of glutathione on the electrophilic groups of a wide range of exogenous and endogenous compounds. Involved in the formation of glutathione conjugates of both prostaglandin A2 (PGA2) and prostaglandin J2 (PGJ2). It also catalyzes the isomerization of D5-androstene-3,17-dione (AD) into D4-androstene-3,17-dione and may therefore play an important role in hormone biosynthesis. Through its glutathione-dependent peroxidase activity toward the fatty acid hydroperoxide (13S)-hydroperoxy-(9Z,11E)-octadecadienoate/13-HPODE it is also involved in the metabolism of oxidized linoleic acid. This Bos taurus (Bovine) protein is Glutathione S-transferase A1 (GSTA1).